Reading from the N-terminus, the 1117-residue chain is Sodium-driven chloride bicarbonate exchanger (1117 aa).

Disordered regions lie at residues 1 to 23 and 58 to 97; these read MEIK…EEAV and GRKS…TPSQ. The Cytoplasmic segment spans residues 1-508; that stretch reads MEIKDQGAQM…DFRDAFSLQC (508 aa). Over residues 59-76 the composition is skewed to basic residues; it reads RKSHRRHRHRGHKHRKRD. A Phosphoserine modification is found at S89. The residue at position 94 (T94) is a Phosphothreonine. The residue at position 275 (S275) is a Phosphoserine. Disordered regions lie at residues 282-309 and 431-476; these read DFSK…KGPP and WDPS…PELQ. Residues 509 to 529 form a helical membrane-spanning segment; the sequence is LASFLFLYCACMSPVITFGGL. Topologically, residues 530–537 are extracellular; sequence LGEATEGR. The helical transmembrane segment at 538–558 threads the bilayer; it reads ISAIESLFGASMTGIAYSLFG. At 559-561 the chain is on the cytoplasmic side; that stretch reads GQP. The helical transmembrane segment at 562 to 582 threads the bilayer; that stretch reads LTILGSTGPVLVFEKILFKFC. Over 583 to 595 the chain is Extracellular; the sequence is KEYGLSYLSLRAS. Residues 596-616 traverse the membrane as a helical segment; that stretch reads IGLWTATLCIILVATDASSLV. Over 617 to 625 the chain is Cytoplasmic; sequence CYITRFTEE. Residues 626–646 form a helical membrane-spanning segment; it reads AFASLICIIFIYEALEKLFEL. Topologically, residues 647–719 are extracellular; sequence SESYPINMHN…VGRACGHGHP (73 aa). 3 N-linked (GlcNAc...) asparagine glycosylation sites follow: N676, N686, and N696. A helical transmembrane segment spans residues 720–740; sequence YVPDVLFWSVILFFSTVTMSA. Residues 741-761 are Cytoplasmic-facing; that stretch reads TLKQFKTSRYFPTKVRSIVSD. Residues 762 to 782 traverse the membrane as a helical segment; that stretch reads FAVFLTILCMVLIDYAIGIPS. Topologically, residues 783-808 are extracellular; it reads PKLQVPSVFKPTRDDRGWFVTPLGPN. The chain crosses the membrane as a helical span at residues 809 to 829; the sequence is PWWTIIAAIIPALLCTILIFM. At 830–854 the chain is on the cytoplasmic side; sequence DQQITAVIINRKEHKLKKGCGYHLD. A helical transmembrane segment spans residues 855–875; the sequence is LLMVAVMLGVCSIMGLPWFVA. Residues 876 to 911 are Extracellular-facing; it reads ATVLSITHVNSLKLESECSAPGEQPKFLGIREQRVT. A helical membrane pass occupies residues 912-932; the sequence is GLMIFILMGSSVFMTSILKFI. Residues 933-934 are Cytoplasmic-facing; sequence PM. A helical transmembrane segment spans residues 935–955; that stretch reads PVLYGVFLYMGASSLKGIQLF. Over 956 to 997 the chain is Extracellular; the sequence is DRIKLFWMPAKHQPDFIYLRHVPLRKVHLFTVIQMSCLGLLW. The chain crosses the membrane as a helical span at residues 998-1018; the sequence is IIKVSRAAIVFPMMVLALVFV. Over 1019-1117 the chain is Cytoplasmic; it reads RKLMDFLFTK…SRFPSKSSPS (99 aa). 2 positions are modified to phosphoserine: S1056 and S1084.

The protein belongs to the anion exchanger (TC 2.A.31) family. Post-translationally, N-glycosylated. As to expression, in the brain, detected in cerebral cortex, subcortex, cerebellum, hippocampus and medulla (at protein level). Expressed in neurons but not in astrocytes (at protein level). Isoforms starting with Met-Glu-Ile-Lys are found predominantly in the brain with lower levels in the eye while isoforms starting with Met-Cys-Asp-Leu are most abundant in the kidney with lower levels in the duodenum, jejunum and ileum (at protein level). In the kidney, isoforms starting with Met-Cys-Asp-Leu are primarily expressed in the cortex, the outer stripe of the outer medulla and the inner stripe of the outer medulla (ISOM) but are not detectable in the inner medulla (IM) while isoforms starting with Met-Glu-Ile-Lys are predominantly expressed in the ISOM and IM. Expressed in the brain, in the hippocampus as well as in dentate gyrus, cortical layers, cerebellum, olfactory bulb and in the epithelial cells of the choroid plexus. Detected in pituitary, testis, kidney and ileum. Detected also in spleen and lung. Mainly expressed in the jejenum (at protein level).

It localises to the basolateral cell membrane. The protein resides in the apical cell membrane. Its subcellular location is the cell projection. It is found in the dendrite. The protein localises to the axon. It localises to the perikaryon. The protein resides in the presynapse. Its subcellular location is the postsynapse. The catalysed reaction is 2 hydrogencarbonate(out) + chloride(in) + Na(+)(out) = 2 hydrogencarbonate(in) + chloride(out) + Na(+)(in). In terms of biological role, sodium/bicarbonate cotransporter which plays an important role in regulating intracellular pH. Has been shown to act as a sodium/bicarbonate cotransporter in exchange for intracellular chloride. Has also been shown to act as a sodium/biocarbonate cotransporter which does not couple net influx of bicarbonate to net efflux of chloride, with the observed chloride efflux being due to chloride self-exchange. Controls neuronal pH and may contribute to the secretion of cerebrospinal fluid. Acting on presynaptic intracellular pH, it promotes GABA release, reduces the excitability of CA1 pyramidal neurons, and modulates short-term synaptic plasticity. Required in retinal cells to maintain normal pH which is necessary for normal vision. In the kidney, likely to mediate bicarbonate reclamation in the apical membrane of the proximal tubules. Sodium/bicarbonate cotransporter which mediates cotransport of sodium and bicarbonate in association with an efflux of intracellular chloride and is involved in NaCl absorption in the small intestine. This Rattus norvegicus (Rat) protein is Sodium-driven chloride bicarbonate exchanger.